The chain runs to 223 residues: Large ribosomal subunit protein uL3 (223 aa).

It belongs to the universal ribosomal protein uL3 family. Part of the 50S ribosomal subunit. Forms a cluster with proteins L14 and L19.

In terms of biological role, one of the primary rRNA binding proteins, it binds directly near the 3'-end of the 23S rRNA, where it nucleates assembly of the 50S subunit. The polypeptide is Large ribosomal subunit protein uL3 (Mycoplasma capricolum subsp. capricolum (strain California kid / ATCC 27343 / NCTC 10154)).